An 875-amino-acid polypeptide reads, in one-letter code: DNA topoisomerase 3-beta (875 aa).

A Toprim domain is found at 3-153 (SVLMVAEKPS…QVTYRAHFSA (151 aa)). Residues 170-589 (NENEAKSVDA…AIKIFKLKFM (420 aa)) enclose the Topo IA-type catalytic domain. Y332 acts as the O-(5'-phospho-DNA)-tyrosine intermediate in catalysis. Residues 371–391 (QTPRKGKDAGDHPPITPMKLG) are disordered.

The protein belongs to the type IA topoisomerase family.

It catalyses the reaction ATP-independent breakage of single-stranded DNA, followed by passage and rejoining.. Releases the supercoiling and torsional tension of DNA introduced during the DNA replication and transcription by transiently cleaving and rejoining one strand of the DNA duplex. Introduces a single-strand break via transesterification at a target site in duplex DNA. The scissile phosphodiester is attacked by the catalytic tyrosine of the enzyme, resulting in the formation of a DNA-(5'-phosphotyrosyl)-enzyme intermediate and the expulsion of a 3'-OH DNA strand. The free DNA strand than undergoes passage around the unbroken strand thus removing DNA supercoils. Finally, in the religation step, the DNA 3'-OH attacks the covalent intermediate to expel the active-site tyrosine and restore the DNA phosphodiester backbone. Weakly relaxes negative supercoils and displays a distinct preference for binding single-stranded DNA. In Drosophila melanogaster (Fruit fly), this protein is DNA topoisomerase 3-beta (Top3beta).